Reading from the N-terminus, the 302-residue chain is Ribostamycin:4-(gamma-L-glutamylamino)-(S)-2-hydroxybutanoyl-[BtrI acyl-carrier protein] 4-(gamma-L-glutamylamino)-(S)-2-hydroxybutanoate transferase (302 aa).

The enzyme catalyses 4-(gamma-L-glutamylamino)-(2S)-2-hydroxybutanoyl-[BtrI ACP] + ribostamycin = gamma-L-glutamyl-butirosin B + holo-[BtrI ACP] + H(+). It functions in the pathway antibiotic biosynthesis; butirosin biosynthesis. Aminoglycoside acyltransferase that attaches the (S)-4-amino-2-hydroxybutyrate (AHBA) side chain from the acyl carrier protein BtrI to the aminoglycoside ribostamycin in the biosynthetic pathway of butirosin. The AHBA side chain protects the antibiotic from several common resistance mechanisms. This is Ribostamycin:4-(gamma-L-glutamylamino)-(S)-2-hydroxybutanoyl-[BtrI acyl-carrier protein] 4-(gamma-L-glutamylamino)-(S)-2-hydroxybutanoate transferase (btrH) from Niallia circulans (Bacillus circulans).